The chain runs to 665 residues: Ribonuclease R 2 (665 aa).

The 327-residue stretch at 202 to 528 (REDYRNEITY…LIIHRLLHLY (327 aa)) folds into the RNB domain. The region spanning 579-662 (GEVYTGTITG…RKGTVDFEQI (84 aa)) is the S1 motif domain.

This sequence belongs to the RNR ribonuclease family. RNase R subfamily.

It localises to the cytoplasm. The catalysed reaction is Exonucleolytic cleavage in the 3'- to 5'-direction to yield nucleoside 5'-phosphates.. Functionally, 3'-5' exoribonuclease that releases 5'-nucleoside monophosphates and is involved in maturation of structured RNAs. The protein is Ribonuclease R 2 of Lactococcus lactis subsp. lactis (strain IL1403) (Streptococcus lactis).